A 152-amino-acid chain; its full sequence is Transcriptional repressor NrdR (152 aa).

A zinc finger lies at 3 to 34 (CPKCTSIEDKVIDSRISKEGSTIRRRRECLEC). Positions 49 to 139 (IVVIKRDGRR…VYKEFRDVSE (91 aa)) constitute an ATP-cone domain.

This sequence belongs to the NrdR family. It depends on Zn(2+) as a cofactor.

Functionally, negatively regulates transcription of bacterial ribonucleotide reductase nrd genes and operons by binding to NrdR-boxes. The polypeptide is Transcriptional repressor NrdR (Opitutus terrae (strain DSM 11246 / JCM 15787 / PB90-1)).